The sequence spans 721 residues: MNSLQSLCVLCSRLSECALELECLRFCDPVTLIPDMTNFRKNGVVIIHLFKTLFAELCHQNFNCASPVTIYLQILLKAMYNQVLLLDASIHQFLLDNDKQKYFENIFQLNECKQHLKLDLALNNYLTFSVDISTINDIEKLLCKMNCIFGLISPLDGINACSQIIEFLTILCGVCVVMKPEVFSETTTCLKCYEELSLVPNQGKSIRKRLAGKFCNHLTETHMVSNLEKNVDIIEKDLDFSTKQYGLVKEYMAKITNIFQQQLYSKPPHLQEAENTLINFDLFSKIPDTIYSLSEFTYWSKISESVIQKASITLNQLNLCHSLYADLQNEISKFLYGETIQDVFNFNEENVTNDDKLYIGSRFISPCRLVDIITNVSIKNLEEDPVFTKLAEEDEIQTKIKTLLNELENSAHETVPKKYVTHSMTQDHNLQQEIHIRKKAYYQKISESGYSKVMLCIKEQEALINKLMNINILGNHIFESLSKMMNAFANRQLQSLENFSADPFTYDDHLYIKNNLLSKKLPQELLPNLSQEMYRLLTGPLSNYHTASFPLSSNISMAYACDVADFLPHMKEDLAKCVEGTIYPENWMLCTYNKFFNFDGLHNINDMQRQMWNFIRELVLSVALYNDVFGKQLSIVKFGEETETVEKILLTFDSGSPLLFKRGTTTTKFNDLYSLLYFDLKTQCDPVQISQTKQVSHIPAPNLLDLCRQNENSIPECFYNF.

A C3H1-type zinc finger spans residues C189–H217. Y625–Q632 is an ATP binding site.

This sequence belongs to the herpesviridae TRM1 protein family. As to quaternary structure, associates with TRM2 and TRM3 to form the tripartite terminase complex. Interacts with portal protein.

It is found in the host nucleus. Component of the molecular motor that translocates viral genomic DNA in empty capsid during DNA packaging. Forms a tripartite terminase complex together with TRM2 and TRM3 in the host cytoplasm. Once the complex reaches the host nucleus, it interacts with the capsid portal vertex. This portal forms a ring in which genomic DNA is translocated into the capsid. TRM1 carries an endonuclease activity that plays an important role for the cleavage of concatemeric viral DNA into unit length genomes. The sequence is that of Tripartite terminase subunit 1 from Homo sapiens (Human).